The primary structure comprises 276 residues: CASP-like protein 4A3 (276 aa).

Polar residues predominate over residues 1-13 (MPSMSPSSISTEK). The segment at 1–76 (MPSMSPSSIS…PVKIEETPSP (76 aa)) is disordered. Over 1 to 126 (MPSMSPSSIS…RRSRREEIVK (126 aa)) the chain is Cytoplasmic. Over residues 43–72 (SLDHSSDSEKEDEKRRPESRRNKNPVKIEE) the composition is skewed to basic and acidic residues. The helical transmembrane segment at 127 to 147 (FVALGFRLSEVVLALISFSIM) threads the bilayer. Over 148 to 167 (AADKTKGWSGDSFDRYKEYR) the chain is Extracellular. The chain crosses the membrane as a helical span at residues 168 to 188 (FCLSVNVVAFIYASFQACDLA). Over 189 to 205 (YHLVKEKHLISHHLRPL) the chain is Cytoplasmic. The chain crosses the membrane as a helical span at residues 206 to 226 (FEFIIDQVLAYLLMCASTAAV). Over 227-244 (TRVDDWVSNWGKDDFTEM) the chain is Extracellular. The chain crosses the membrane as a helical span at residues 245–265 (ASASIAMSFLTFLAFAFSSLI). The Cytoplasmic segment spans residues 266–276 (SGYNLFNQDSL).

Belongs to the Casparian strip membrane proteins (CASP) family. In terms of assembly, homodimer and heterodimers.

The protein resides in the cell membrane. This is CASP-like protein 4A3 from Arabidopsis lyrata subsp. lyrata (Lyre-leaved rock-cress).